The primary structure comprises 1162 residues: Topoisomerase 1-associated factor 1 (1162 aa).

2 disordered regions span residues 977-1017 (TEGR…EANA) and 1127-1162 (TQVVSSEEYSSHPLEEEVTSEQRKRKKPRIESDTEY). Residues 993–1003 (QRSKGKRKAIA) are compositionally biased toward basic residues.

Belongs to the timeless family. Component of the fork protection complex (FPC) consisting of TOF1 and CSM3.

The protein localises to the nucleus. Functionally, forms a fork protection complex (FPC) with CSM3 and which is required for chromosome segregation during meiosis and DNA damage repair. FPC coordinates leading and lagging strand synthesis and moves with the replication fork. FPC stabilizes replication forks in a configuration that is recognized by replication checkpoint sensors. This chain is Topoisomerase 1-associated factor 1 (TOF1), found in Kluyveromyces lactis (strain ATCC 8585 / CBS 2359 / DSM 70799 / NBRC 1267 / NRRL Y-1140 / WM37) (Yeast).